We begin with the raw amino-acid sequence, 918 residues long: Plasma membrane ATPase 1 (918 aa).

Over residues 1 to 18 the composition is skewed to low complexity; the sequence is MTDTSSSSSSSSASSVSA. Residues 1-84 form a disordered region; that stretch reads MTDTSSSSSS…VPEEYLQTDP (84 aa). The Cytoplasmic portion of the chain corresponds to 1-115; that stretch reads MTDTSSSSSS…ADEKESLVVK (115 aa). Residues 33–47 show a composition bias toward acidic residues; it reads AASESSDDDDIDALI. Serine 61 bears the Phosphoserine mark. The helical transmembrane segment at 116–136 threads the bilayer; that stretch reads FVMFFVGPIQFVMEAAAILAA. Residues 137–140 lie on the Extracellular side of the membrane; that stretch reads GLSD. A helical membrane pass occupies residues 141–160; sequence WVDFGVICGLLMLNAGVGFV. At 161 to 291 the chain is on the cytoplasmic side; that stretch reads QEFQAGSIVD…GQGHFTEVLN (131 aa). Threonine 175 carries the phosphothreonine modification. Lysine 252 is covalently cross-linked (Glycyl lysine isopeptide (Lys-Gly) (interchain with G-Cter in ubiquitin)). A helical transmembrane segment spans residues 292-313; that stretch reads GIGIILLVLVIATLLLVWTACF. At 314–325 the chain is on the extracellular side; it reads YRTNGIVRILRY. The helical transmembrane segment at 326 to 347 threads the bilayer; the sequence is TLGITIIGVPVGLPAVVTTTMA. Topologically, residues 348-719 are cytoplasmic; it reads VGAAYLAKKQ…IAILDNSLDI (372 aa). Residue aspartate 378 is the 4-aspartylphosphate intermediate of the active site. Lysine 555 is covalently cross-linked (Glycyl lysine isopeptide (Lys-Gly) (interchain with G-Cter in ubiquitin)). Residues aspartate 634 and aspartate 638 each coordinate Mg(2+). The chain crosses the membrane as a helical span at residues 720-738; that stretch reads DLIVFIAIFADVATLAIAY. Residues 739-754 lie on the Extracellular side of the membrane; the sequence is DNAPYSPKPVKWNLPR. A helical membrane pass occupies residues 755 to 774; the sequence is LWGMSIILGIVLAIGSWITL. Residues 775-824 are Cytoplasmic-facing; that stretch reads TTMFLPKGGIIQNFGAMNGIMFLQISLTENWLIFITRAAGPFWSSIPSWQ. Residues 825 to 845 traverse the membrane as a helical segment; sequence LAGAVFAVDIIATMFTLFGWW. At 846 to 857 the chain is on the extracellular side; that stretch reads SENWTDIVTVVR. The helical transmembrane segment at 858–874 threads the bilayer; the sequence is VWIWSIGIFCVLGGFYY. The Cytoplasmic portion of the chain corresponds to 875 to 918; it reads EMSTSEAFDRLMNGKPMKEKKSTRSVEDFMAAMQRVSTQHEKET. A Phosphoserine modification is found at serine 911. Phosphothreonine occurs at positions 912 and 918.

It belongs to the cation transport ATPase (P-type) (TC 3.A.3) family. Type IIIA subfamily. As to quaternary structure, interacts with its cargot receptor EXP1 for its transport within the cell and maturation. Post-translationally, phosphorylated on multiple Ser and Thr residues.

It is found in the cell membrane. It catalyses the reaction ATP + H2O + H(+)(in) = ADP + phosphate + 2 H(+)(out). The plasma membrane ATPase of plants and fungi is a hydrogen ion pump. The proton gradient it generates drives the active transport of nutrients by H(+)-symport. The resulting external acidification and/or internal alkinization may mediate growth responses. This chain is Plasma membrane ATPase 1 (PMA1), found in Saccharomyces cerevisiae (strain ATCC 204508 / S288c) (Baker's yeast).